Reading from the N-terminus, the 247-residue chain is Fibroblast growth factor 14 (247 aa).

Disordered regions lie at residues 1 to 38 and 216 to 247; these read MAAA…KNRG and ETVP…CKTT. Over residues 15–25 the composition is skewed to basic and acidic residues; it reads QAREQHWDRPS.

It belongs to the heparin-binding growth factors family. In terms of assembly, interacts with SCN8A.

It is found in the nucleus. In terms of biological role, probably involved in nervous system development and function. The polypeptide is Fibroblast growth factor 14 (Fgf14) (Rattus norvegicus (Rat)).